A 542-amino-acid polypeptide reads, in one-letter code: Calcium-dependent protein kinase 7 (542 aa).

Residue Gly2 is the site of N-myristoyl glycine attachment. The Protein kinase domain maps to 79–337 (YIIGRKLGQG…AHEVLRHPWI (259 aa)). Residues 85 to 93 (LGQGQFGTT) and Lys108 each bind ATP. Asp203 acts as the Proton acceptor in catalysis. Positions 343 to 373 (ATDQALDPSVISRLKQFSAMNKLKKLALRVI) are autoinhibitory domain. Residues 380 to 415 (EEIAGLREMFKAVDTKNRGVITFGELREGLRRFGAE) enclose the EF-hand 1 domain. Ca(2+)-binding residues include Asp393, Glu404, Asp431, Asn433, Thr435, Glu440, Asp465, Asp467, Ser469, Tyr471, Lys476, Asp499, Asn501, Asp503, Gln505, and Glu510. Residues 416–451 (FKDTEIGDIMEAAHNDNNVTIHYEEFIAATLPLNKI) form the EF-hand 2; degenerate domain. 2 consecutive EF-hand domains span residues 452–487 (EREE…HNME) and 488–521 (DSLL…SNVG).

This sequence belongs to the protein kinase superfamily. Ser/Thr protein kinase family. CDPK subfamily. Expressed in roots. Expressed in leaf sheaths.

It is found in the membrane. The protein localises to the cytoplasm. Its subcellular location is the cytosol. It carries out the reaction L-seryl-[protein] + ATP = O-phospho-L-seryl-[protein] + ADP + H(+). The catalysed reaction is L-threonyl-[protein] + ATP = O-phospho-L-threonyl-[protein] + ADP + H(+). Its activity is regulated as follows. Activated by calcium. Autophosphorylation may play an important role in the regulation of the kinase activity. May play a role in signal transduction pathways that involve calcium as a second messenger. May be a signaling component in the response to gibberellin and cold stress. In Oryza sativa subsp. japonica (Rice), this protein is Calcium-dependent protein kinase 7.